A 186-amino-acid polypeptide reads, in one-letter code: Early nodulin-like protein 13 (186 aa).

The first 23 residues, 1–23 (MAQRTLVATFFLIFFLLTNLVCS), serve as a signal peptide directing secretion. A Phytocyanin domain is found at 24-128 (KEIIVGGKTS…GEKLHIVVMS (105 aa)). A disulfide bond links Cys82 and Cys116. N-linked (GlcNAc...) asparagine glycosylation is found at Asn83 and Asn90. The GPI-anchor amidated alanine moiety is linked to residue Ala165. The propeptide at 166–186 (SSLTRQVGVLGFVGLLAIVLL) is removed in mature form.

The protein belongs to the early nodulin-like (ENODL) family. Mostly expressed in seedlings, siliques and flowers, and, to a lower extent, in roots, stems and seeds, but barely in leaves.

It is found in the cell membrane. In terms of biological role, may act as a carbohydrate transporter. Required, together with ENODL11, ENODL12, ENODL13, ENODL14 and ENODL15, for male-female communication and pollen tube reception and burst at the synergid cell surface of the female gametophyte. The polypeptide is Early nodulin-like protein 13 (Arabidopsis thaliana (Mouse-ear cress)).